A 295-amino-acid polypeptide reads, in one-letter code: Xyloglucan endotransglucosylase protein 2 (295 aa).

Residues 1–23 form the signal peptide; that stretch reads MAMGTHFGGLWLALLCMVSATMG. Residues 24–222 form the GH16 domain; it reads AVPRKPVDVP…WSKAPFVASY (199 aa). Residue glutamate 108 is the Nucleophile of the active site. Glutamate 112 serves as the catalytic Proton donor. Glutamate 112 contributes to the xyloglucan binding site. Asparagine 116 is a glycosylation site (N-linked (GlcNAc...) asparagine). Xyloglucan-binding positions include 125-127, 135-137, 201-202, and glycine 206; these read QTN, DRE, and DW. 2 disulfide bridges follow: cysteine 230–cysteine 239 and cysteine 276–cysteine 289. Xyloglucan is bound at residue arginine 281.

The protein belongs to the glycosyl hydrolase 16 family. XTH group 1 subfamily. In terms of processing, contains at least one intrachain disulfide bond essential for its enzymatic activity. As to expression, expressed in fruit pulp.

It is found in the secreted. It localises to the cell wall. Its subcellular location is the extracellular space. The protein localises to the apoplast. It catalyses the reaction breaks a beta-(1-&gt;4) bond in the backbone of a xyloglucan and transfers the xyloglucanyl segment on to O-4 of the non-reducing terminal glucose residue of an acceptor, which can be a xyloglucan or an oligosaccharide of xyloglucan.. Catalyzes xyloglucan endotransglycosylation (XET). Cleaves and religates xyloglucan polymers. Does not catalyze xyloglucan endohydrolysis (XEH). Probably involved in cell wall restructuring during fruit ripening and postharvest fruit softening. The polypeptide is Xyloglucan endotransglucosylase protein 2 (Diospyros kaki (Kaki persimmon)).